We begin with the raw amino-acid sequence, 486 residues long: Transcription enhancer factor-like protein egl-44 (486 aa).

Residues 47 to 57 (GTTTPTTTSGG) show a composition bias toward low complexity. The segment at 47–87 (GTTTPTTTSGGQMMTLSPPAGDGPGSAGSMAPESTSSLSDL) is disordered. The segment at residues 88 to 164 (SGDAEGVWSI…QVLARKKLRD (77 aa)) is a DNA-binding region (TEA). The tract at residues 165–188 (EQAKKKGDIPSLLQQASPPGGVKS) is disordered.

As to quaternary structure, interacts (via N-terminus) with egl-46 (via C-terminus); the interaction is direct; the interaction may regulate transcription. Interacts with yap-1 (via WW domain); the interaction may regulate transcription. As to expression, expressed in HSN neurons in embryos and in the FLP neurons from the L1 stage through to adults. Not expressed in touch cells. Also expressed in larval hypodermis, intestine, pharyngeal muscle and other neurons. In adults expression is lost from some neurons, is weaker in the hypodermis but remains in the intestine. Expressed in HOB neuron, ray neurons RnA and RnB, and the ray structural cell, Rnst; rays are male-specific genital sensilla (simple sense organs).

The protein localises to the nucleus. Functionally, transcription factor. Binds to DNA sequence motif 5'-CATNNNNAAATGCAT-3' as a heterodimer with egl-46. Represses expression of genes involved in differentiation of touch receptor neurons (TRN), probably acting as a heterodimer with egl-46, perhaps by occupying similar cis-regulatory elements as an unc-86/mec-3 heterodimer. Plays a role in cell fate specification of neurons, including the hook neuron HOB, and touch receptor neurons. Involved in male mating behavior, acting in concert with egl-46, via modulation of expression of polycystins lov-1 and pkd-2, homeodomain protein ceh-26, and neuropeptide-like protein nlp-8. Acts upstream of egl-46 to prevent touch cell differentiation in FLP neurons. Plays a role in neuron differentiation by repressing the expression of zag-1 in FLP neurons, probably acting as a heterodimer with egl-46; because zag-1 represses expression of egl-46 and egl-44, together these proteins form a bistable, negative-feedback loop that regulates the choice between neuronal fates. Also promotes HSN neuron development. In association with egl-46, regulates cell cycle exit in the neuronal Q cell lineage. Plays a role in specifying commissural dendrites of the PVD nociceptive neurons, acting in concert with egl-46. May be involved in thermal stress response downstream of yap-1. The polypeptide is Transcription enhancer factor-like protein egl-44 (egl-44) (Caenorhabditis elegans).